We begin with the raw amino-acid sequence, 96 residues long: Small ribosomal subunit protein bS6 (96 aa).

Belongs to the bacterial ribosomal protein bS6 family.

Binds together with bS18 to 16S ribosomal RNA. This chain is Small ribosomal subunit protein bS6, found in Bacillus mycoides (strain KBAB4) (Bacillus weihenstephanensis).